A 315-amino-acid polypeptide reads, in one-letter code: Ribosomal RNA small subunit methyltransferase H (315 aa).

Residues glycine 37 to histidine 39, aspartate 57, phenylalanine 83, aspartate 105, and glutamine 112 each bind S-adenosyl-L-methionine. The interval glutamate 296–arginine 315 is disordered.

It belongs to the methyltransferase superfamily. RsmH family.

It is found in the cytoplasm. It carries out the reaction cytidine(1402) in 16S rRNA + S-adenosyl-L-methionine = N(4)-methylcytidine(1402) in 16S rRNA + S-adenosyl-L-homocysteine + H(+). Specifically methylates the N4 position of cytidine in position 1402 (C1402) of 16S rRNA. The polypeptide is Ribosomal RNA small subunit methyltransferase H (Stutzerimonas stutzeri (strain A1501) (Pseudomonas stutzeri)).